Here is a 338-residue protein sequence, read N- to C-terminus: Malate dehydrogenase, mitochondrial (338 aa).

A mitochondrion-targeting transit peptide spans 1-24; that stretch reads MLSALARPAGAALRRSFSTSXQNN. NAD(+)-binding positions include 31–37 and Asp-57; that span reads GASGGIG. Ser-33 is a glycosylation site (O-linked (GlcNAc) serine). 2 positions are modified to N6-acetyllysine; alternate: Lys-78 and Lys-91. 2 positions are modified to N6-succinyllysine; alternate: Lys-78 and Lys-91. Positions 104 and 110 each coordinate substrate. NAD(+)-binding positions include Asn-117 and 140-142; that span reads ISN. Asn-142 contacts substrate. Lys-165 carries the N6-acetyllysine modification. Arg-176 contacts substrate. At Lys-185 the chain carries N6-acetyllysine; alternate. Lys-185 carries the N6-succinyllysine; alternate modification. His-200 acts as the Proton acceptor in catalysis. Lys-203 carries the post-translational modification N6-succinyllysine. An N6-acetyllysine; alternate mark is found at Lys-215 and Lys-239. N6-succinyllysine; alternate occurs at positions 215 and 239. N6-malonyllysine; alternate is present on Lys-239. Ser-246 is modified (phosphoserine). Met-251 contacts NAD(+). Residue Lys-269 is modified to N6-succinyllysine. Lys-296, Lys-301, Lys-307, Lys-314, and Lys-324 each carry N6-acetyllysine; alternate. An N6-succinyllysine; alternate mark is found at Lys-296, Lys-301, Lys-307, Lys-314, and Lys-324. Lys-307 carries the N6-malonyllysine; alternate modification. At Ser-326 the chain carries Phosphoserine. Residues Lys-328, Lys-329, and Lys-335 each carry the N6-acetyllysine; alternate modification. Lys-328 is modified (N6-succinyllysine; alternate). An N6-malonyllysine; alternate modification is found at Lys-329. Lys-335 bears the N6-succinyllysine; alternate mark.

The protein belongs to the LDH/MDH superfamily. MDH type 1 family. In terms of assembly, homodimer. Acetylation is enhanced after treatment either with trichostin A (TCA) or with nicotinamide (NAM) with the appearance of tri- and tetraacetylations. Glucose also increases acetylation.

It is found in the mitochondrion matrix. The catalysed reaction is (S)-malate + NAD(+) = oxaloacetate + NADH + H(+). Its activity is regulated as follows. Enzyme activity is enhanced by acetylation. This Sus scrofa (Pig) protein is Malate dehydrogenase, mitochondrial (MDH2).